Consider the following 889-residue polypeptide: Chitin synthase I (889 aa).

The N-linked (GlcNAc...) asparagine glycan is linked to Asn-43. Positions 94–138 are disordered; it reads GEYFDGYNQGHPPQEHQAYDDDGQPLIEDQHGYSDNPQHQTQTPA. Polar residues predominate over residues 126–137; that stretch reads YSDNPQHQTQTP. The N-linked (GlcNAc...) asparagine glycan is linked to Asn-199. 9 helical membrane passes run 431–451, 530–550, 560–580, 606–626, 641–661, 687–707, 716–736, 815–835, and 861–881; these read SAFG…YVAL, RWLN…YEFF, LAFF…WFAI, ILGV…FVLS, MVWF…FIAV, TLII…IIMF, FIQY…YAFC, GVVL…LSSA, and IVLW…MWFL.

This sequence belongs to the chitin synthase family. Class I subfamily. In terms of tissue distribution, expressed in hyphal bodies.

It localises to the cell membrane. It catalyses the reaction [(1-&gt;4)-N-acetyl-beta-D-glucosaminyl](n) + UDP-N-acetyl-alpha-D-glucosamine = [(1-&gt;4)-N-acetyl-beta-D-glucosaminyl](n+1) + UDP + H(+). Its function is as follows. Polymerizes chitin, a structural polymer of the cell wall and septum, by transferring the sugar moiety of UDP-GlcNAc to the non-reducing end of the growing chitin polymer. Contributes to the production of conidia and the ability of fungal conidia to germinate. Not involved in fungal stress tolerances. The chain is Chitin synthase I from Metarhizium acridum (strain CQMa 102).